The following is a 356-amino-acid chain: Transcription factor ATOH1 (356 aa).

The segment covering 1–21 (MSRLLHAEEWAEVKELGDHHR) has biased composition (basic and acidic residues). Disordered stretches follow at residues 1–56 (MSRL…PELS) and 92–125 (SEAA…GPVK). Over residues 26-40 (HHLPQPPPPPPPQPP) the composition is skewed to pro residues. Basic and acidic residues predominate over residues 96-109 (APRDEVDGRGELVR). Positions 110-124 (RSSGGASSSKSPGPV) are enriched in low complexity. The bHLH domain occupies 161–213 (QRRLAANARERRRMHGLNHAFDQLRNVIPSFNNDKKLSKYETLQMAQIYINAL). 2 disordered regions span residues 218–279 (QTPS…TRFS) and 314–356 (SPSL…DEAS). The segment covering 252-266 (NATAAGAQQASGGSQ) has biased composition (low complexity). A compositionally biased stretch (basic and acidic residues) spans 337–356 (HRSDGEFSPHSHYSDSDEAS).

Efficient DNA binding requires dimerization with another bHLH protein.

It localises to the nucleus. Functionally, transcriptional regulator. Activates E box-dependent transcription in collaboration with TCF3/E47, but the activity is completely antagonized by the negative regulator of neurogenesis HES1. Plays a role in the differentiation of subsets of neural cells by activating E box-dependent transcription. In Pan troglodytes (Chimpanzee), this protein is Transcription factor ATOH1.